The sequence spans 390 residues: 5-hydroxytryptamine receptor 1B (390 aa).

Over 1-46 (MEEPGAQCAPPLAAGSQIAVPQANLSAAHSHNCSAEGYIYQDSIAL) the chain is Extracellular. N-linked (GlcNAc...) asparagine glycans are attached at residues asparagine 24 and asparagine 32. The helical transmembrane segment at 47-72 (PWKVLLVLLLALFTLATTLSNAFVVA) threads the bilayer. At 73–86 (TVYRTRKLHTPANY) the chain is on the cytoplasmic side. A helical transmembrane segment spans residues 87 to 111 (LIASLAVTDLLVSILVMPISTMYTV). At 112–119 (TGRWTLGQ) the chain is on the extracellular side. A helical membrane pass occupies residues 120 to 145 (VVCDLWLSSDITCCTASIMHLCVIAL). Cysteine 122 and cysteine 199 are disulfide-bonded. Ergotamine-binding residues include aspartate 129 and threonine 134. A DRY motif; important for ligand-induced conformation changes and signaling motif is present at residues 146–148 (DRY). Residues 146-165 (DRYWAITDAVEYSAKRTPKR) lie on the Cytoplasmic side of the membrane. A helical transmembrane segment spans residues 166-184 (AAIMIRLVWVFSICISLPP). Residues 185-205 (FFWRQAKAEEEVSECLVNTDH) lie on the Extracellular side of the membrane. Valine 201 contacts ergotamine. Residues 206–229 (VLYTVYSTVGAFYLPTLLLIALYG) traverse the membrane as a helical segment. Residues 230-315 (RIYVEARSRI…AARERKATKT (86 aa)) are Cytoplasmic-facing. The segment covering 260–272 (SPGSTTSVTSINS) has biased composition (polar residues). The tract at residues 260–282 (SPGSTTSVTSINSRAPDVPSESG) is disordered. Residues 316–337 (LGIILGVFIVCWLPFFIISLVM) traverse the membrane as a helical segment. Residues 338–347 (PICKDACWFH) are Extracellular-facing. A helical transmembrane segment spans residues 348-370 (QAIFDFFTWLGYVNSLINPIIYT). An NPxxY motif; important for ligand-induced conformation changes and signaling motif is present at residues 365–369 (NPIIY). At 371–390 (MSNEDFKQAFHKLIRFKCTS) the chain is on the cytoplasmic side. Residue cysteine 388 is the site of S-palmitoyl cysteine attachment.

The protein belongs to the G-protein coupled receptor 1 family. As to quaternary structure, homodimer. Heterodimer with HTR1D. Post-translationally, phosphorylated. Desensitization of the receptor may be mediated by its phosphorylation. Palmitoylated.

It is found in the cell membrane. Its function is as follows. G-protein coupled receptor for 5-hydroxytryptamine (serotonin). Also functions as a receptor for ergot alkaloid derivatives, various anxiolytic and antidepressant drugs and other psychoactive substances, such as lysergic acid diethylamide (LSD). Ligand binding causes a conformation change that triggers signaling via guanine nucleotide-binding proteins (G proteins) and modulates the activity of downstream effectors, such as adenylate cyclase. HTR1B is coupled to G(i)/G(o) G alpha proteins and mediates inhibitory neurotransmission by inhibiting adenylate cyclase activity. Arrestin family members inhibit signaling via G proteins and mediate activation of alternative signaling pathways. Regulates the release of 5-hydroxytryptamine, dopamine and acetylcholine in the brain, and thereby affects neural activity, nociceptive processing, pain perception, mood and behavior. Besides, plays a role in vasoconstriction of cerebral arteries. This is 5-hydroxytryptamine receptor 1B (HTR1B) from Oryctolagus cuniculus (Rabbit).